The chain runs to 475 residues: Ribulose bisphosphate carboxylase large chain (475 aa).

Positions 1 to 2 (MS) are excised as a propeptide. Pro3 is modified (N-acetylproline). Lys14 carries the post-translational modification N6,N6,N6-trimethyllysine. Residues Asn123 and Thr173 each coordinate substrate. Lys175 serves as the catalytic Proton acceptor. Lys177 is a binding site for substrate. The Mg(2+) site is built by Lys201, Asp203, and Glu204. At Lys201 the chain carries N6-carboxylysine. His294 serves as the catalytic Proton acceptor. Residues Arg295, His327, and Ser379 each coordinate substrate.

Belongs to the RuBisCO large chain family. Type I subfamily. Heterohexadecamer of 8 large chains and 8 small chains; disulfide-linked. The disulfide link is formed within the large subunit homodimers. The cofactor is Mg(2+). Post-translationally, the disulfide bond which can form in the large chain dimeric partners within the hexadecamer appears to be associated with oxidative stress and protein turnover.

Its subcellular location is the plastid. The protein localises to the chloroplast. The enzyme catalyses 2 (2R)-3-phosphoglycerate + 2 H(+) = D-ribulose 1,5-bisphosphate + CO2 + H2O. It catalyses the reaction D-ribulose 1,5-bisphosphate + O2 = 2-phosphoglycolate + (2R)-3-phosphoglycerate + 2 H(+). Functionally, ruBisCO catalyzes two reactions: the carboxylation of D-ribulose 1,5-bisphosphate, the primary event in carbon dioxide fixation, as well as the oxidative fragmentation of the pentose substrate in the photorespiration process. Both reactions occur simultaneously and in competition at the same active site. The sequence is that of Ribulose bisphosphate carboxylase large chain from Gossypium hirsutum (Upland cotton).